A 106-amino-acid chain; its full sequence is Integration host factor subunit alpha (106 aa).

The protein belongs to the bacterial histone-like protein family. In terms of assembly, heterodimer of an alpha and a beta chain.

In terms of biological role, this protein is one of the two subunits of integration host factor, a specific DNA-binding protein that functions in genetic recombination as well as in transcriptional and translational control. This Nitrobacter winogradskyi (strain ATCC 25391 / DSM 10237 / CIP 104748 / NCIMB 11846 / Nb-255) protein is Integration host factor subunit alpha.